The sequence spans 99 residues: uncharacterized protein (99 aa).

This is an uncharacterized protein from Methanocaldococcus jannaschii (strain ATCC 43067 / DSM 2661 / JAL-1 / JCM 10045 / NBRC 100440) (Methanococcus jannaschii).